The chain runs to 87 residues: UPF0250 protein YbeD (87 aa).

Belongs to the UPF0250 family.

The protein is UPF0250 protein YbeD of Shigella boydii serotype 18 (strain CDC 3083-94 / BS512).